The sequence spans 167 residues: Low molecular mass early light-inducible protein HV60, chloroplastic (167 aa).

A chloroplast-targeting transit peptide spans 1-33; it reads MATMMAMSSFAGAAVLPRGSARSLPALGRRTLV. The next 2 membrane-spanning stretches (helical) occupy residues 101-121 and 145-165; these read GQAW…VPLL and FAMI…TPFI.

It belongs to the ELIP/psbS family.

The protein localises to the plastid. The protein resides in the chloroplast membrane. Probably involved in the integration of pigments into the mature pigment-protein complexes. The protein is Low molecular mass early light-inducible protein HV60, chloroplastic of Hordeum vulgare (Barley).